A 134-amino-acid chain; its full sequence is Cytochrome b5 (134 aa).

An N-acetylalanine modification is found at A2. Residues K7, K10, and K19 each carry the N6-acetyllysine modification. The Cytochrome b5 heme-binding domain maps to 9–85; the sequence is VKYYTLEEIK…SKTFIIGELH (77 aa). Heme contacts are provided by H44 and H68. Residues 109 to 131 form a helical membrane-spanning segment; sequence WWTNWVIPAISALIVALMYRLYM.

The protein belongs to the cytochrome b5 family.

It localises to the endoplasmic reticulum membrane. Its subcellular location is the microsome membrane. Functionally, cytochrome b5 is a membrane-bound hemoprotein functioning as an electron carrier for several membrane-bound oxygenases. This chain is Cytochrome b5 (CYB5A), found in Oryctolagus cuniculus (Rabbit).